A 262-amino-acid chain; its full sequence is Type III pantothenate kinase (262 aa).

9-16 (DAGNSRIK) contacts ATP. Substrate contacts are provided by residues tyrosine 96 and 103–106 (GSDR). The Proton acceptor role is filled by aspartate 105. Threonine 129 is an ATP binding site. A substrate-binding site is contributed by threonine 189.

The protein belongs to the type III pantothenate kinase family. Homodimer. The cofactor is NH4(+). It depends on K(+) as a cofactor.

The protein resides in the cytoplasm. It catalyses the reaction (R)-pantothenate + ATP = (R)-4'-phosphopantothenate + ADP + H(+). It functions in the pathway cofactor biosynthesis; coenzyme A biosynthesis; CoA from (R)-pantothenate: step 1/5. Catalyzes the phosphorylation of pantothenate (Pan), the first step in CoA biosynthesis. In Burkholderia ambifaria (strain MC40-6), this protein is Type III pantothenate kinase.